A 194-amino-acid chain; its full sequence is ATP-dependent Clp protease proteolytic subunit (194 aa).

The Nucleophile role is filled by Ser-98. His-123 is an active-site residue.

Belongs to the peptidase S14 family. In terms of assembly, fourteen ClpP subunits assemble into 2 heptameric rings which stack back to back to give a disk-like structure with a central cavity, resembling the structure of eukaryotic proteasomes.

It localises to the cytoplasm. The catalysed reaction is Hydrolysis of proteins to small peptides in the presence of ATP and magnesium. alpha-casein is the usual test substrate. In the absence of ATP, only oligopeptides shorter than five residues are hydrolyzed (such as succinyl-Leu-Tyr-|-NHMec, and Leu-Tyr-Leu-|-Tyr-Trp, in which cleavage of the -Tyr-|-Leu- and -Tyr-|-Trp bonds also occurs).. Cleaves peptides in various proteins in a process that requires ATP hydrolysis. Has a chymotrypsin-like activity. Plays a major role in the degradation of misfolded proteins. This Actinobacillus succinogenes (strain ATCC 55618 / DSM 22257 / CCUG 43843 / 130Z) protein is ATP-dependent Clp protease proteolytic subunit.